Here is a 319-residue protein sequence, read N- to C-terminus: Beta-ketoacyl-[acyl-carrier-protein] synthase III (319 aa).

Catalysis depends on residues Cys113 and His246. The segment at 247–251 (QANIR) is ACP-binding. The active site involves Asn276.

This sequence belongs to the thiolase-like superfamily. FabH family. In terms of assembly, homodimer.

It localises to the cytoplasm. The catalysed reaction is malonyl-[ACP] + acetyl-CoA + H(+) = 3-oxobutanoyl-[ACP] + CO2 + CoA. Its pathway is lipid metabolism; fatty acid biosynthesis. Functionally, catalyzes the condensation reaction of fatty acid synthesis by the addition to an acyl acceptor of two carbons from malonyl-ACP. Catalyzes the first condensation reaction which initiates fatty acid synthesis and may therefore play a role in governing the total rate of fatty acid production. Possesses both acetoacetyl-ACP synthase and acetyl transacylase activities. Its substrate specificity determines the biosynthesis of branched-chain and/or straight-chain of fatty acids. In Ehrlichia ruminantium (strain Welgevonden), this protein is Beta-ketoacyl-[acyl-carrier-protein] synthase III.